Consider the following 437-residue polypeptide: GTPase Era, mitochondrial (437 aa).

A mitochondrion-targeting transit peptide spans 1-20 (MAAPRRYFPGIVRALLGAWQ). Positions 112-330 (RVLRVVLLGA…QYLLTQAQPG (219 aa)) constitute an Era-type G domain. Residues 120–127 (GAPNAGKS) are G1. 120–127 (GAPNAGKS) lines the GTP pocket. The interval 146–150 (HTTRC) is G2. The G3 stretch occupies residues 167–170 (DTPG). Residue 167–171 (DTPGI) coordinates GTP. Ser-173 is modified (phosphoserine). A GTP-binding site is contributed by 236–239 (NKVD). The segment at 236 to 239 (NKVD) is G4. Positions 272–293 (SRPSTHCPGPETEDPNTHAVRS) are disordered. The segment at 308-310 (LSA) is G5. A KH type-2 domain is found at 360–437 (LPEEVPYSVQ…LLRLSVKLLK (78 aa)).

The protein belongs to the TRAFAC class TrmE-Era-EngA-EngB-Septin-like GTPase superfamily. Era GTPase family.

The protein localises to the mitochondrion matrix. It is found in the mitochondrion inner membrane. Probable GTPase that plays a role in the mitochondrial ribosomal small subunit assembly. Specifically binds the 12S mitochondrial rRNA (12S mt-rRNA) to a 33 nucleotide section delineating the 3' terminal stem-loop region. May act as a chaperone that protects the 12S mt-rRNA on the 28S mitoribosomal subunit during ribosomal small subunit assembly. This Rattus norvegicus (Rat) protein is GTPase Era, mitochondrial (Eral1).